The primary structure comprises 96 residues: NADH-ubiquinone oxidoreductase chain 4L (96 aa).

A run of 3 helical transmembrane segments spans residues 2–22 (IMILYWSLPMILFILGLFCFV), 28–48 (LLSMLLSLEFIVLMLFFMLFI), and 62–82 (MFLTFSVCEGALGLSILVSMI).

This sequence belongs to the complex I subunit 4L family.

The protein localises to the mitochondrion membrane. The enzyme catalyses a ubiquinone + NADH + 5 H(+)(in) = a ubiquinol + NAD(+) + 4 H(+)(out). Its function is as follows. Core subunit of the mitochondrial membrane respiratory chain NADH dehydrogenase (Complex I) that is believed to belong to the minimal assembly required for catalysis. Complex I functions in the transfer of electrons from NADH to the respiratory chain. The immediate electron acceptor for the enzyme is believed to be ubiquinone. This Drosophila melanogaster (Fruit fly) protein is NADH-ubiquinone oxidoreductase chain 4L (mt:ND4L).